Reading from the N-terminus, the 361-residue chain is uncharacterized protein (361 aa).

2 disordered regions span residues 53-75 (KNIS…NINN) and 150-211 (NYNN…YHHY). Residues 150-198 (NYNNYNNNNNNNNNNNNNNNNNNNNNNNNNNNNNNKNNNKNNNNKPNNF) are compositionally biased toward low complexity. Residues 199–211 (IHHHHHHHHYHHY) show a composition bias toward basic residues. A helical transmembrane segment spans residues 225–245 (IFIGLMAFLILFILMVIGLLI).

It localises to the membrane. This is an uncharacterized protein from Dictyostelium discoideum (Social amoeba).